The following is a 269-amino-acid chain: Formamidopyrimidine-DNA glycosylase (269 aa).

Pro-2 functions as the Schiff-base intermediate with DNA in the catalytic mechanism. Glu-3 acts as the Proton donor in catalysis. Residue Lys-57 is the Proton donor; for beta-elimination activity of the active site. Positions 90, 109, and 150 each coordinate DNA. Residues Gln-235–Lys-269 form an FPG-type zinc finger. The Proton donor; for delta-elimination activity role is filled by Arg-259.

This sequence belongs to the FPG family. As to quaternary structure, monomer. Zn(2+) is required as a cofactor.

It carries out the reaction Hydrolysis of DNA containing ring-opened 7-methylguanine residues, releasing 2,6-diamino-4-hydroxy-5-(N-methyl)formamidopyrimidine.. It catalyses the reaction 2'-deoxyribonucleotide-(2'-deoxyribose 5'-phosphate)-2'-deoxyribonucleotide-DNA = a 3'-end 2'-deoxyribonucleotide-(2,3-dehydro-2,3-deoxyribose 5'-phosphate)-DNA + a 5'-end 5'-phospho-2'-deoxyribonucleoside-DNA + H(+). Its function is as follows. Involved in base excision repair of DNA damaged by oxidation or by mutagenic agents. Acts as a DNA glycosylase that recognizes and removes damaged bases. Has a preference for oxidized purines, such as 7,8-dihydro-8-oxoguanine (8-oxoG). Has AP (apurinic/apyrimidinic) lyase activity and introduces nicks in the DNA strand. Cleaves the DNA backbone by beta-delta elimination to generate a single-strand break at the site of the removed base with both 3'- and 5'-phosphates. This chain is Formamidopyrimidine-DNA glycosylase, found in Escherichia coli (strain 55989 / EAEC).